The chain runs to 75 residues: uncharacterized protein (75 aa).

An N-terminal signal peptide occupies residues 1 to 25 (MSLFYRAVALGTLSALVWYSTSILA). Residues 55–75 (YRALLAFSLVICGTLLVTCVI) form a helical membrane-spanning segment.

It is found in the host endoplasmic reticulum membrane. Plays a role in the down-regulation of the host NKG2D ligand MICA by targeting ER-resident MICA to proteasomal degradation prior to the GPI-anchoring step. In turn, MICA reduction diminishes NK-cell killing of HCMV-infected cells. This is an uncharacterized protein from Homo sapiens (Human).